Consider the following 192-residue polypeptide: Ribosome maturation factor RimM (192 aa).

A PRC barrel domain is found at 99-186 (ADEYHVSELV…RIEIAPPPGL (88 aa)).

This sequence belongs to the RimM family. As to quaternary structure, binds ribosomal protein uS19.

The protein resides in the cytoplasm. An accessory protein needed during the final step in the assembly of 30S ribosomal subunit, possibly for assembly of the head region. Essential for efficient processing of 16S rRNA. May be needed both before and after RbfA during the maturation of 16S rRNA. It has affinity for free ribosomal 30S subunits but not for 70S ribosomes. In Microcystis aeruginosa (strain NIES-843 / IAM M-2473), this protein is Ribosome maturation factor RimM.